The following is a 203-amino-acid chain: Formate hydrogenlyase subunit 2 (203 aa).

4Fe-4S ferredoxin-type domains are found at residues 2–32 (NRFVIADSTLCIGCHTCEAACSETHRQHGLQ), 42–72 (NEKESAPQLCHHCEDAPCAVVCPVNAITRVD), 73–102 (GAVQLNESLCVSCKLCGIACPFGAIEFSGS), and 137–169 (RAIAVKCDLCSFDEQGPACVRMCPTKALHLVDN). [4Fe-4S] cluster contacts are provided by cysteine 12, cysteine 15, cysteine 18, cysteine 22, cysteine 51, cysteine 54, cysteine 59, cysteine 63, cysteine 82, cysteine 85, cysteine 88, cysteine 92, cysteine 143, cysteine 146, cysteine 155, and cysteine 159.

In terms of assembly, FHL comprises of a formate dehydrogenase, unidentified electron carriers and a hydrogenase (isoenzyme 3). In this non-energy conserving pathway, molecular hydrogen and carbodioxide are released from formate. Requires [4Fe-4S] cluster as cofactor.

Its function is as follows. Probable electron transfer protein for hydrogenase 3. In Escherichia coli (strain K12), this protein is Formate hydrogenlyase subunit 2 (hycB).